A 41-amino-acid chain; its full sequence is Photosystem II reaction center protein J (41 aa).

Residues 9 to 29 (IPLWFVGMVGGLAALGLLAIF) form a helical membrane-spanning segment.

The protein belongs to the PsbJ family. In terms of assembly, PSII is composed of 1 copy each of membrane proteins PsbA, PsbB, PsbC, PsbD, PsbE, PsbF, PsbH, PsbI, PsbJ, PsbK, PsbL, PsbM, PsbT, PsbX, PsbY, PsbZ, Psb30/Ycf12, at least 3 peripheral proteins of the oxygen-evolving complex and a large number of cofactors. It forms dimeric complexes.

It is found in the plastid. Its subcellular location is the chloroplast thylakoid membrane. Functionally, one of the components of the core complex of photosystem II (PSII). PSII is a light-driven water:plastoquinone oxidoreductase that uses light energy to abstract electrons from H(2)O, generating O(2) and a proton gradient subsequently used for ATP formation. It consists of a core antenna complex that captures photons, and an electron transfer chain that converts photonic excitation into a charge separation. This is Photosystem II reaction center protein J from Ostreococcus tauri.